Here is a 265-residue protein sequence, read N- to C-terminus: 4-hydroxy-tetrahydrodipicolinate reductase (265 aa).

NAD(+)-binding positions include 7 to 12 (GASGRM) and D33. R34 lines the NADP(+) pocket. NAD(+) contacts are provided by residues 96–98 (GTT) and 120–123 (AANM). The Proton donor/acceptor role is filled by H153. (S)-2,3,4,5-tetrahydrodipicolinate is bound at residue H154. K157 functions as the Proton donor in the catalytic mechanism. (S)-2,3,4,5-tetrahydrodipicolinate is bound at residue 163-164 (GT).

Belongs to the DapB family.

The protein resides in the cytoplasm. The catalysed reaction is (S)-2,3,4,5-tetrahydrodipicolinate + NAD(+) + H2O = (2S,4S)-4-hydroxy-2,3,4,5-tetrahydrodipicolinate + NADH + H(+). It carries out the reaction (S)-2,3,4,5-tetrahydrodipicolinate + NADP(+) + H2O = (2S,4S)-4-hydroxy-2,3,4,5-tetrahydrodipicolinate + NADPH + H(+). It functions in the pathway amino-acid biosynthesis; L-lysine biosynthesis via DAP pathway; (S)-tetrahydrodipicolinate from L-aspartate: step 4/4. Functionally, catalyzes the conversion of 4-hydroxy-tetrahydrodipicolinate (HTPA) to tetrahydrodipicolinate. This chain is 4-hydroxy-tetrahydrodipicolinate reductase, found in Burkholderia multivorans (strain ATCC 17616 / 249).